A 292-amino-acid polypeptide reads, in one-letter code: Acetyl-coenzyme A carboxylase carboxyl transferase subunit beta (292 aa).

A CoA carboxyltransferase N-terminal domain is found at 36–292; sequence MWSKCEKCAK…LLRMHEVDYE (257 aa). Zn(2+) is bound by residues C40, C43, C59, and C62. A C4-type zinc finger spans residues 40–62; the sequence is CEKCAKILYTEDLRENFNVCPNC.

This sequence belongs to the AccD/PCCB family. As to quaternary structure, acetyl-CoA carboxylase is a heterohexamer composed of biotin carboxyl carrier protein (AccB), biotin carboxylase (AccC) and two subunits each of ACCase subunit alpha (AccA) and ACCase subunit beta (AccD). The cofactor is Zn(2+).

It is found in the cytoplasm. It carries out the reaction N(6)-carboxybiotinyl-L-lysyl-[protein] + acetyl-CoA = N(6)-biotinyl-L-lysyl-[protein] + malonyl-CoA. It functions in the pathway lipid metabolism; malonyl-CoA biosynthesis; malonyl-CoA from acetyl-CoA: step 1/1. Its function is as follows. Component of the acetyl coenzyme A carboxylase (ACC) complex. Biotin carboxylase (BC) catalyzes the carboxylation of biotin on its carrier protein (BCCP) and then the CO(2) group is transferred by the transcarboxylase to acetyl-CoA to form malonyl-CoA. The chain is Acetyl-coenzyme A carboxylase carboxyl transferase subunit beta from Clostridium perfringens (strain 13 / Type A).